The primary structure comprises 308 residues: Phenylcoumaran benzylic ether reductase Betv6 (308 aa).

Residues G11–G17, R36, and K45 contribute to the NADP(+) site. K133 (proton acceptor) is an active-site residue. R137 is an NADP(+) binding site.

Belongs to the NmrA-type oxidoreductase family. Isoflavone reductase subfamily.

The enzyme catalyses (-)-dehydrodiconiferyl alcohol + NADPH + H(+) = (S)-isodihydrodehydrodiconiferyl alcohol + NADP(+). It catalyses the reaction (+)-dehydrodiconiferyl alcohol + NADPH + H(+) = (R)-isodihydrodehydrodiconiferyl alcohol + NADP(+). Its function is as follows. Oxidoreductase involved in lignan biosynthesis. Catalyzes the NADPH-dependent reduction of phenylcoumaran benzylic ethers. Converts dehydrodiconiferyl alcohol (DDC) to isodihydrodehydrodiconiferyl alcohol (IDDDC). The protein is Phenylcoumaran benzylic ether reductase Betv6 of Betula pendula (European white birch).